A 650-amino-acid chain; its full sequence is MPRDALSFELQLSAGLEATEHKLDMLTRLLRRTHVAVKHPLLASRAFHTSPALRAIDMAKVDTTERLAELRKLMKERKVDVYTYISGFTGSAGYAVVTHDKAALATDGRYFNQAEKQLDSNWELLKQGIQDVPTIQEWTADQVEGGKVVGVDPSVVTGADARKLAEKIKKKGGEYKAVDDNLVDLVWAAERPARPSEKVIVQPMEYSGKSFDEKVEDLRKELEKKKSLGFVVSMLDEVAWLFNLRGNDIPYNPVFFSYAVITPTVVTLYVDESKLPKEVKDHLGDKVAIRPYEAIFGDITALSKDAFEAADADATKKFLTSNRASWALNKALGGDDKVEEIRSPIGDAKAVKNEVELEGMRQCHIRDGAAISEYFAWLEDQLLNKKATLDEVDGADKLEAIRKKHDKFMGLSFDTISSTGPNGAVIHYKPEKGACSIIDPNAIYLCDSGAQYHDGTTDTTRTLHFTKPTDMEKKAYTLVLKGNIALERVKFPKGTTGFALDSIARQFLWAEGLDYRHGTGHGVGSFLNVHEGPIGIGTRVQYSEVSLAVGNVISDEPGYYEDGKFGIRIENMIMVKEVETNHKFGDKPYLGFEHVTLTPHCRNLVDMTLLTEDEKKFINDYHKEVFEKTSKFFENDKLTMDWLKRETAPY.

The Mn(2+) site is built by Asp-447, Asp-458, Glu-556, and Glu-570.

This sequence belongs to the peptidase M24B family. It depends on Mn(2+) as a cofactor.

The enzyme catalyses Release of any N-terminal amino acid, including proline, that is linked to proline, even from a dipeptide or tripeptide.. In terms of biological role, catalyzes the removal of a penultimate prolyl residue from the N-termini of peptides. This chain is Probable Xaa-Pro aminopeptidase P (AMPP), found in Phaeosphaeria nodorum (strain SN15 / ATCC MYA-4574 / FGSC 10173) (Glume blotch fungus).